Reading from the N-terminus, the 311-residue chain is Aspartate carbamoyltransferase catalytic subunit (311 aa).

2 residues coordinate carbamoyl phosphate: R55 and T56. K85 lines the L-aspartate pocket. The carbamoyl phosphate site is built by R106, H135, and Q138. Residues R168 and R230 each contribute to the L-aspartate site. The carbamoyl phosphate site is built by L268 and P269.

Belongs to the aspartate/ornithine carbamoyltransferase superfamily. ATCase family. In terms of assembly, heterododecamer (2C3:3R2) of six catalytic PyrB chains organized as two trimers (C3), and six regulatory PyrI chains organized as three dimers (R2).

The enzyme catalyses carbamoyl phosphate + L-aspartate = N-carbamoyl-L-aspartate + phosphate + H(+). Its pathway is pyrimidine metabolism; UMP biosynthesis via de novo pathway; (S)-dihydroorotate from bicarbonate: step 2/3. Catalyzes the condensation of carbamoyl phosphate and aspartate to form carbamoyl aspartate and inorganic phosphate, the committed step in the de novo pyrimidine nucleotide biosynthesis pathway. The sequence is that of Aspartate carbamoyltransferase catalytic subunit from Baumannia cicadellinicola subsp. Homalodisca coagulata.